The following is a 931-amino-acid chain: Netrin receptor UNC5C (931 aa).

Positions 1 to 40 are cleaved as a signal peptide; sequence MRKGLRATAARCGLGLGYLLQMLVLPALALLSASGTGSAA. The Extracellular portion of the chain corresponds to 41–380; that stretch reads QDDDFFHELP…APDSDDVALY (340 aa). Residues 62–159 enclose the Ig-like domain; it reads PHFLIEPEEA…AGTTKSRKAY (98 aa). Cystine bridges form between Cys83–Cys144, Cys95–Cys142, Cys188–Cys239, Cys272–Cys309, Cys276–Cys313, Cys287–Cys299, Cys328–Cys362, Cys332–Cys367, and Cys340–Cys352. The 96-residue stretch at 161-256 folds into the Ig-like C2-type domain; that stretch reads RIAYLRKTFE…KRKSTTATVI (96 aa). A glycan (N-linked (GlcNAc...) asparagine) is linked at Asn236. 2 TSP type-1 domains span residues 260–314 and 316–368; these read NGGW…TLCP and DGRW…GLCM. Residue Asn361 is glycosylated (N-linked (GlcNAc...) asparagine). Residues 381–401 traverse the membrane as a helical segment; it reads VGIVIAVIVCLAISVVVALFV. The Cytoplasmic segment spans residues 402-931; sequence YRKNHRDFES…VVSLAAEGQY (530 aa). Residues 402 to 931 form a required for netrin-mediated axon repulsion of neuronal growth cones region; that stretch reads YRKNHRDFES…VVSLAAEGQY (530 aa). Ser502 bears the Phosphoserine mark. The 144-residue stretch at 530–673 folds into the ZU5 domain; that stretch reads CTAFGSFNSL…LSTYALVGHS (144 aa). Tyr568 is modified (phosphotyrosine). Residues 694-712 form an interaction with DCC region; the sequence is SLEYSIRVYCLDDTQDALK. In terms of domain architecture, Death spans 850–929; that stretch reads QKLCSSLDAP…ETVVSLAAEG (80 aa).

It belongs to the unc-5 family. Interacts with DCC (via cytoplasmic domain). Interacts (tyrosine phosphorylated form) with PTPN11. Interacts (via extracellular domain) with FLRT3 (via extracellular domain). Interacts (via Ig-like C2-type domain) with DSCAM (via extracellular domain). Interacts (via death domain) with DAPK1. Interacts (via cytoplasmic domain) with TUBB3; this interaction is decreased by NTN1/Netrin-1. In terms of processing, proteolytically cleaved by caspases during apoptosis. The cleavage does not take place when the receptor is associated with netrin ligand. Its cleavage by caspases is required to induce apoptosis. Post-translationally, phosphorylated on different cytoplasmic tyrosine residues. Phosphorylation of Tyr-568 leads to an interaction with PTPN11 phosphatase, suggesting that its activity is regulated by phosphorylation/dephosphorylation. Tyrosine phosphorylation is netrin-dependent. Mainly expressed in brain. Expressed in temporal lobe cortical neurons and in neurons of the hippocampal pyramidal layer. Also expressed in kidney. Not expressed in developing or adult lung.

Its subcellular location is the cell membrane. The protein resides in the cell surface. It localises to the synapse. The protein localises to the synaptosome. It is found in the cell projection. Its subcellular location is the axon. The protein resides in the dendrite. It localises to the growth cone. The protein localises to the lamellipodium. It is found in the filopodium. In terms of biological role, receptor for netrin required for axon guidance. Mediates axon repulsion of neuronal growth cones in the developing nervous system upon ligand binding. NTN1/Netrin-1 binding might cause dissociation of UNC5C from polymerized TUBB3 in microtubules and thereby lead to increased microtubule dynamics and axon repulsion. Axon repulsion in growth cones may also be caused by its association with DCC that may trigger signaling for repulsion. Might also collaborate with DSCAM in NTN1-mediated axon repulsion independently of DCC. Also involved in corticospinal tract axon guidance independently of DCC. Involved in dorsal root ganglion axon projection towards the spinal cord. It also acts as a dependence receptor required for apoptosis induction when not associated with netrin ligand. The polypeptide is Netrin receptor UNC5C (UNC5C) (Homo sapiens (Human)).